The sequence spans 443 residues: Probable glycine dehydrogenase (decarboxylating) subunit 1 (443 aa).

This sequence belongs to the GcvP family. N-terminal subunit subfamily. The glycine cleavage system is composed of four proteins: P, T, L and H. In this organism, the P 'protein' is a heterodimer of two subunits.

It catalyses the reaction N(6)-[(R)-lipoyl]-L-lysyl-[glycine-cleavage complex H protein] + glycine + H(+) = N(6)-[(R)-S(8)-aminomethyldihydrolipoyl]-L-lysyl-[glycine-cleavage complex H protein] + CO2. Functionally, the glycine cleavage system catalyzes the degradation of glycine. The P protein binds the alpha-amino group of glycine through its pyridoxal phosphate cofactor; CO(2) is released and the remaining methylamine moiety is then transferred to the lipoamide cofactor of the H protein. This chain is Probable glycine dehydrogenase (decarboxylating) subunit 1, found in Oleidesulfovibrio alaskensis (strain ATCC BAA-1058 / DSM 17464 / G20) (Desulfovibrio alaskensis).